A 485-amino-acid polypeptide reads, in one-letter code: Envelope glycoprotein C (485 aa).

The first 32 residues, 1–32 (MGLVNIMRFITFAYIICGGFILTRTSGTSASA), serve as a signal peptide directing secretion. Residues 28-72 (TSASASPATPTTNTGEGTSSPVTPTYTTSTDSNNSTATNNSTDVN) show a composition bias toward low complexity. The disordered stretch occupies residues 28–88 (TSASASPATP…TPSHPHSHEN (61 aa)). The Virion surface segment spans residues 33 to 444 (SPATPTTNTG…DASPIVEDMP (412 aa)). 11 N-linked (GlcNAc...) asparagine; by host glycosylation sites follow: asparagine 60, asparagine 61, asparagine 66, asparagine 67, asparagine 72, asparagine 108, asparagine 116, asparagine 147, asparagine 220, asparagine 225, and asparagine 286. Cysteine 92 and cysteine 109 are joined by a disulfide. The Ig-like domain maps to 237–330 (PLMDLSVHPS…EWYRDEVSFS (94 aa)). 3 cysteine pairs are disulfide-bonded: cysteine 256/cysteine 318, cysteine 357/cysteine 416, and cysteine 361/cysteine 390. The chain crosses the membrane as a helical span at residues 445 to 468 (VLTGIIAVTCGAAALALVVLITAV). Residues 469-485 (CFYCSKPSQVPYKKADF) lie on the Cytoplasmic side of the membrane.

This sequence belongs to the herpesviridae glycoprotein C family. In terms of assembly, interacts with host complement component C3; this interaction inhibits host immune response by disregulating complement cascade.

Its subcellular location is the virion membrane. Its function is as follows. Essential for the initial attachment to heparan sulfate moieties of the host cell surface proteoglycans. Also plays a role in host immune evasion by inhibiting the host complement cascade activation. This Equine herpesvirus 4 (strain 1942) (EHV-4) protein is Envelope glycoprotein C (gC).